A 277-amino-acid chain; its full sequence is Large ribosomal subunit protein uL2 (277 aa).

Residues 219 to 277 (TVRGSVMNPNDHPHGGGEGKAPVGRKAPSTPWGKPALGLKTRNKKAKSDKLIVRRRNEK) form a disordered region. The segment covering 264–277 (AKSDKLIVRRRNEK) has biased composition (basic and acidic residues).

Belongs to the universal ribosomal protein uL2 family. Part of the 50S ribosomal subunit. Forms a bridge to the 30S subunit in the 70S ribosome.

In terms of biological role, one of the primary rRNA binding proteins. Required for association of the 30S and 50S subunits to form the 70S ribosome, for tRNA binding and peptide bond formation. It has been suggested to have peptidyltransferase activity; this is somewhat controversial. Makes several contacts with the 16S rRNA in the 70S ribosome. The chain is Large ribosomal subunit protein uL2 from Streptococcus pneumoniae serotype 2 (strain D39 / NCTC 7466).